Consider the following 252-residue polypeptide: Protein BTG3 (252 aa).

The disordered stretch occupies residues 138–163; that stretch reads VTSDYHSGSSSSDEDTSKEVDVKPSS.

This sequence belongs to the BTG family. Ubiquitous.

Overexpression impairs serum-induced cell cycle progression from the G0/G1 to S phase. The sequence is that of Protein BTG3 (Btg3) from Mus musculus (Mouse).